We begin with the raw amino-acid sequence, 254 residues long: Glutathione S-transferase F14 (254 aa).

One can recognise a GST N-terminal domain in the interval 4–85 (SKMKLHCGFI…YLAEQYKDVG (82 aa)). Glutathione contacts are provided by residues 42–43 (AK), 56–57 (EV), and 69–70 (EP). The GST C-terminal domain occupies 92 to 231 (DPKKRAIMSM…DLMKQRRLPI (140 aa)).

The protein belongs to the GST superfamily. Phi family.

It localises to the cytoplasm. It is found in the cytosol. It catalyses the reaction RX + glutathione = an S-substituted glutathione + a halide anion + H(+). Functionally, may be involved in the conjugation of reduced glutathione to a wide number of exogenous and endogenous hydrophobic electrophiles and have a detoxification role against certain herbicides. The polypeptide is Glutathione S-transferase F14 (Arabidopsis thaliana (Mouse-ear cress)).